Here is an 88-residue protein sequence, read N- to C-terminus: Sec-independent protein translocase protein TatA (88 aa).

The helical transmembrane segment at M1–G21 threads the bilayer. A disordered region spans residues K41–V88. 2 stretches are compositionally biased toward basic and acidic residues: residues A42–T65 and S73–V88.

It belongs to the TatA/E family. As to quaternary structure, the Tat system comprises two distinct complexes: a TatABC complex, containing multiple copies of TatA, TatB and TatC subunits, and a separate TatA complex, containing only TatA subunits. Substrates initially bind to the TatABC complex, which probably triggers association of the separate TatA complex to form the active translocon.

It is found in the cell inner membrane. Part of the twin-arginine translocation (Tat) system that transports large folded proteins containing a characteristic twin-arginine motif in their signal peptide across membranes. TatA could form the protein-conducting channel of the Tat system. The polypeptide is Sec-independent protein translocase protein TatA (Proteus mirabilis (strain HI4320)).